Reading from the N-terminus, the 495-residue chain is UDP-N-acetylmuramoyl-L-alanyl-D-glutamate--2,6-diaminopimelate ligase (495 aa).

UDP-N-acetyl-alpha-D-muramoyl-L-alanyl-D-glutamate contacts are provided by residues Leu-27, Ser-29, and 44–46 (HQA). 116 to 122 (GTNGKTT) provides a ligand contact to ATP. UDP-N-acetyl-alpha-D-muramoyl-L-alanyl-D-glutamate is bound by residues Asn-157, 158–159 (TT), Ser-185, Gln-191, and Arg-193. The residue at position 225 (Lys-225) is an N6-carboxylysine. Residues Arg-390, 414–417 (DNPR), Gly-465, and Glu-469 contribute to the meso-2,6-diaminopimelate site. The short motif at 414–417 (DNPR) is the Meso-diaminopimelate recognition motif element.

Belongs to the MurCDEF family. MurE subfamily. Requires Mg(2+) as cofactor. Post-translationally, carboxylation is probably crucial for Mg(2+) binding and, consequently, for the gamma-phosphate positioning of ATP.

The protein localises to the cytoplasm. The catalysed reaction is UDP-N-acetyl-alpha-D-muramoyl-L-alanyl-D-glutamate + meso-2,6-diaminopimelate + ATP = UDP-N-acetyl-alpha-D-muramoyl-L-alanyl-gamma-D-glutamyl-meso-2,6-diaminopimelate + ADP + phosphate + H(+). Its pathway is cell wall biogenesis; peptidoglycan biosynthesis. Functionally, catalyzes the addition of meso-diaminopimelic acid to the nucleotide precursor UDP-N-acetylmuramoyl-L-alanyl-D-glutamate (UMAG) in the biosynthesis of bacterial cell-wall peptidoglycan. The sequence is that of UDP-N-acetylmuramoyl-L-alanyl-D-glutamate--2,6-diaminopimelate ligase from Salmonella typhimurium (strain LT2 / SGSC1412 / ATCC 700720).